Reading from the N-terminus, the 382-residue chain is N-acetyldiaminopimelate deacetylase (382 aa).

Asp-73 is an active-site residue. The Proton acceptor role is filled by Glu-132.

It belongs to the peptidase M20A family. N-acetyldiaminopimelate deacetylase subfamily.

It carries out the reaction N-acetyl-(2S,6S)-2,6-diaminopimelate + H2O = (2S,6S)-2,6-diaminopimelate + acetate. It participates in amino-acid biosynthesis; L-lysine biosynthesis via DAP pathway; LL-2,6-diaminopimelate from (S)-tetrahydrodipicolinate (acetylase route): step 3/3. Functionally, catalyzes the conversion of N-acetyl-diaminopimelate to diaminopimelate and acetate. The chain is N-acetyldiaminopimelate deacetylase from Oenococcus oeni (strain ATCC BAA-331 / PSU-1).